The chain runs to 341 residues: L-threonine 3-dehydrogenase (341 aa).

Cys38 contributes to the Zn(2+) binding site. Catalysis depends on charge relay system residues Thr40 and His43. Positions 63, 64, 93, 96, 99, and 107 each coordinate Zn(2+). Residues Ile175, Asp195, Arg200, 262–264, and 286–287 contribute to the NAD(+) site; these read LGI and IY.

It belongs to the zinc-containing alcohol dehydrogenase family. Homotetramer. Zn(2+) serves as cofactor.

It is found in the cytoplasm. The enzyme catalyses L-threonine + NAD(+) = (2S)-2-amino-3-oxobutanoate + NADH + H(+). It functions in the pathway amino-acid degradation; L-threonine degradation via oxydo-reductase pathway; glycine from L-threonine: step 1/2. Catalyzes the NAD(+)-dependent oxidation of L-threonine to 2-amino-3-ketobutyrate. The polypeptide is L-threonine 3-dehydrogenase (Escherichia coli O17:K52:H18 (strain UMN026 / ExPEC)).